Consider the following 295-residue polypeptide: Bifunctional protein FolD (295 aa).

Residues G166–S168, S191, and I232 contribute to the NADP(+) site.

The protein belongs to the tetrahydrofolate dehydrogenase/cyclohydrolase family. Homodimer.

It carries out the reaction (6R)-5,10-methylene-5,6,7,8-tetrahydrofolate + NADP(+) = (6R)-5,10-methenyltetrahydrofolate + NADPH. The catalysed reaction is (6R)-5,10-methenyltetrahydrofolate + H2O = (6R)-10-formyltetrahydrofolate + H(+). The protein operates within one-carbon metabolism; tetrahydrofolate interconversion. Its function is as follows. Catalyzes the oxidation of 5,10-methylenetetrahydrofolate to 5,10-methenyltetrahydrofolate and then the hydrolysis of 5,10-methenyltetrahydrofolate to 10-formyltetrahydrofolate. The protein is Bifunctional protein FolD of Wolbachia pipientis subsp. Culex pipiens (strain wPip).